We begin with the raw amino-acid sequence, 454 residues long: Bifunctional protein GlmU (454 aa).

The pyrophosphorylase stretch occupies residues 1 to 232 (MTDRTCLSIV…VDNVIGINNR (232 aa)). UDP-N-acetyl-alpha-D-glucosamine is bound by residues 11 to 14 (LAAG), lysine 25, glutamine 78, and 83 to 84 (GT). Mg(2+) is bound at residue aspartate 108. Residues glycine 144, glutamate 158, asparagine 173, and asparagine 230 each contribute to the UDP-N-acetyl-alpha-D-glucosamine site. Residue asparagine 230 participates in Mg(2+) binding. The tract at residues 233–253 (AELAEAETIWQNRKRRELMLS) is linker. Residues 254 to 454 (GVTLIAPETV…AIKAAKSVSK (201 aa)) are N-acetyltransferase. Positions 319 and 337 each coordinate UDP-N-acetyl-alpha-D-glucosamine. The active-site Proton acceptor is histidine 349. UDP-N-acetyl-alpha-D-glucosamine-binding residues include tyrosine 352 and asparagine 363. Residues alanine 366, 372–373 (NY), serine 391, serine 409, and arginine 426 each bind acetyl-CoA.

The protein in the N-terminal section; belongs to the N-acetylglucosamine-1-phosphate uridyltransferase family. It in the C-terminal section; belongs to the transferase hexapeptide repeat family. As to quaternary structure, homotrimer. Mg(2+) is required as a cofactor.

It localises to the cytoplasm. It carries out the reaction alpha-D-glucosamine 1-phosphate + acetyl-CoA = N-acetyl-alpha-D-glucosamine 1-phosphate + CoA + H(+). The catalysed reaction is N-acetyl-alpha-D-glucosamine 1-phosphate + UTP + H(+) = UDP-N-acetyl-alpha-D-glucosamine + diphosphate. Its pathway is nucleotide-sugar biosynthesis; UDP-N-acetyl-alpha-D-glucosamine biosynthesis; N-acetyl-alpha-D-glucosamine 1-phosphate from alpha-D-glucosamine 6-phosphate (route II): step 2/2. It participates in nucleotide-sugar biosynthesis; UDP-N-acetyl-alpha-D-glucosamine biosynthesis; UDP-N-acetyl-alpha-D-glucosamine from N-acetyl-alpha-D-glucosamine 1-phosphate: step 1/1. The protein operates within bacterial outer membrane biogenesis; LPS lipid A biosynthesis. In terms of biological role, catalyzes the last two sequential reactions in the de novo biosynthetic pathway for UDP-N-acetylglucosamine (UDP-GlcNAc). The C-terminal domain catalyzes the transfer of acetyl group from acetyl coenzyme A to glucosamine-1-phosphate (GlcN-1-P) to produce N-acetylglucosamine-1-phosphate (GlcNAc-1-P), which is converted into UDP-GlcNAc by the transfer of uridine 5-monophosphate (from uridine 5-triphosphate), a reaction catalyzed by the N-terminal domain. This chain is Bifunctional protein GlmU, found in Brucella canis (strain ATCC 23365 / NCTC 10854 / RM-666).